A 426-amino-acid chain; its full sequence is UDP-N-acetylglucosamine 1-carboxyvinyltransferase (426 aa).

Residue 24–25 (KN) participates in phosphoenolpyruvate binding. Arg-95 contacts UDP-N-acetyl-alpha-D-glucosamine. The active-site Proton donor is Cys-119. 2-(S-cysteinyl)pyruvic acid O-phosphothioketal is present on Cys-119. UDP-N-acetyl-alpha-D-glucosamine contacts are provided by residues 124–128 (RPVDQ), Asp-308, and Val-330.

Belongs to the EPSP synthase family. MurA subfamily.

The protein resides in the cytoplasm. The catalysed reaction is phosphoenolpyruvate + UDP-N-acetyl-alpha-D-glucosamine = UDP-N-acetyl-3-O-(1-carboxyvinyl)-alpha-D-glucosamine + phosphate. The protein operates within cell wall biogenesis; peptidoglycan biosynthesis. Its function is as follows. Cell wall formation. Adds enolpyruvyl to UDP-N-acetylglucosamine. The protein is UDP-N-acetylglucosamine 1-carboxyvinyltransferase of Deinococcus radiodurans (strain ATCC 13939 / DSM 20539 / JCM 16871 / CCUG 27074 / LMG 4051 / NBRC 15346 / NCIMB 9279 / VKM B-1422 / R1).